We begin with the raw amino-acid sequence, 286 residues long: Pyridoxal kinase PdxY (286 aa).

Residues serine 9 and threonine 44–glutamine 45 each bind substrate. ATP is bound by residues aspartate 111, glutamate 148, and lysine 181. Aspartate 222 serves as a coordination point for substrate.

This sequence belongs to the pyridoxine kinase family. PdxY subfamily. In terms of assembly, homodimer. Mg(2+) serves as cofactor.

The enzyme catalyses pyridoxal + ATP = pyridoxal 5'-phosphate + ADP + H(+). The protein operates within cofactor metabolism; pyridoxal 5'-phosphate salvage; pyridoxal 5'-phosphate from pyridoxal: step 1/1. Its function is as follows. Pyridoxal kinase involved in the salvage pathway of pyridoxal 5'-phosphate (PLP). Catalyzes the phosphorylation of pyridoxal to PLP. The protein is Pyridoxal kinase PdxY of Pasteurella multocida (strain Pm70).